A 152-amino-acid polypeptide reads, in one-letter code: SsrA-binding protein (152 aa).

Belongs to the SmpB family.

The protein resides in the cytoplasm. Functionally, required for rescue of stalled ribosomes mediated by trans-translation. Binds to transfer-messenger RNA (tmRNA), required for stable association of tmRNA with ribosomes. tmRNA and SmpB together mimic tRNA shape, replacing the anticodon stem-loop with SmpB. tmRNA is encoded by the ssrA gene; the 2 termini fold to resemble tRNA(Ala) and it encodes a 'tag peptide', a short internal open reading frame. During trans-translation Ala-aminoacylated tmRNA acts like a tRNA, entering the A-site of stalled ribosomes, displacing the stalled mRNA. The ribosome then switches to translate the ORF on the tmRNA; the nascent peptide is terminated with the 'tag peptide' encoded by the tmRNA and targeted for degradation. The ribosome is freed to recommence translation, which seems to be the essential function of trans-translation. The protein is SsrA-binding protein of Rickettsia typhi (strain ATCC VR-144 / Wilmington).